We begin with the raw amino-acid sequence, 222 residues long: Prolactin-2C5 (222 aa).

The first 29 residues, Met-1–Ser-29, serve as a signal peptide directing secretion. A disulfide bridge connects residues Cys-33 and Cys-40. An N-linked (GlcNAc...) asparagine glycan is attached at Asn-57. Cystine bridges form between Cys-87-Cys-197 and Cys-214-Cys-222.

Belongs to the somatotropin/prolactin family. In terms of processing, N-glycosylated and sialylated. In terms of tissue distribution, expressed in placenta (at protein level). Expressed in the tail hair follicle, with highest expression detected in the keratinocytes of the outer root sheath. Expressed in ear skin with lesser amounts in small intestine. Not detected in brain at 18 dpc, postnatal day 25 or postnatal day 55.

Its subcellular location is the secreted. This is Prolactin-2C5 from Mus musculus (Mouse).